An 894-amino-acid chain; its full sequence is MNIEGDDEEFYNFNDIKKKRKFTKEDAIYGVFNDGWGDYEDEEESKMTEEEYYKMKKRYSTPVGFVASGIYEPNEHKLKNKDGENIDNDDDDGEEKKKKKKEKKEKKQKKKEKKEKKEKKNKKKNKYGGGGGNNYDDSDNDKSIEDKPVGGIGAALLSKMGYKGTGGLGRDGGGMVEPIKVQVRPKNAGLASVTELNVNSSDDSDDSDQSEGDTDSDNENKRSLGWKKKEPKLKYDFDEHLESTTTTTFKKKTTTTTATTTTSSTPQIVIDMRGPEARLYTGMEEIKHHKHHHHHQHNKEYQNITSILDDQSKPLSELKHNVDLLLKLKQIDIQNQDNKIKHENDKINNLTRGVEKLKLTIENDKEQIKKVTEILETITTVKKQLDQSQLDLKQLYKVFKKLKSNYPKEYQNFKLYNLQKELLEPLLKEKLNQWELESNSDNNDNSSLEISKKLSKEMVKWRQLFQESVSVLGEYQINVYFLIMRDLFLPKFKNYLRSQWDVKKPSNAATLISTWSDTLPDVIQEALLEQSILPKLKVAIEKWDPRTDPIPLDHWLLPWIPLLGSELESFYPLIRQKIISALQDWHPSDKSAIKILTPWKNIFQSNSMDSLLNRAIIPKLSKSIKDLEINPSNQKSPIEIQWLLRWSNLNNNDNNNNNNNNNNNDNNNNNNSITTTDNINLDSGLITLSTIICILEKDFFTRWLKILLEWLKSPDANLEEISNWYSGWKKQFPKEIISNDKIKSIFNISLNLMKKVLSNETIQKDDEILISQKINSLLNTNINNNNNNNNNINNSYQQQNQQQPIKPISSPSLNSSNNNNIDNISTKQMVEQLAIKNGLLFIPSEKKTNSGQQIYIFDKIPIIIERDLIMYNNNNNNRWEPANIQYLLDKSLNK.

2 disordered regions span residues 71–149 (YEPN…DKPV) and 187–225 (NAGL…RSLG). The segment covering 73 to 84 (PNEHKLKNKDGE) has biased composition (basic and acidic residues). The segment covering 97 to 126 (KKKKKEKKEKKQKKKEKKEKKEKKNKKKNK) has biased composition (basic residues). Residues 149 to 195 (VGGIGAALLSKMGYKGTGGLGRDGGGMVEPIKVQVRPKNAGLASVTE) enclose the G-patch domain. Residues 202–217 (DDSDDSDQSEGDTDSD) show a composition bias toward acidic residues. Residues 329 to 449 (KQIDIQNQDN…SDNNDNSSLE (121 aa)) adopt a coiled-coil conformation. The segment at 785–821 (NNNNNNNINNSYQQQNQQQPIKPISSPSLNSSNNNNI) is disordered.

This sequence belongs to the TFP11/STIP family. In terms of assembly, identified in the spliceosome C complex.

Its subcellular location is the cytoplasm. The protein localises to the nucleus. May be involved in pre-mRNA splicing. The sequence is that of Septin and tuftelin-interacting protein 1 homolog (stip-1) from Dictyostelium discoideum (Social amoeba).